The primary structure comprises 612 residues: UvrABC system protein C (612 aa).

The region spanning 20–98 (THSGVYRMLD…IKQHRPKYNI (79 aa)) is the GIY-YIG domain. In terms of domain architecture, UVR spans 208 to 243 (SSVLEEISAKMYQASEDMEYEKAQVYRDQLVVLRKL).

The protein belongs to the UvrC family. As to quaternary structure, interacts with UvrB in an incision complex.

It localises to the cytoplasm. The UvrABC repair system catalyzes the recognition and processing of DNA lesions. UvrC both incises the 5' and 3' sides of the lesion. The N-terminal half is responsible for the 3' incision and the C-terminal half is responsible for the 5' incision. This is UvrABC system protein C from Francisella tularensis subsp. mediasiatica (strain FSC147).